The following is a 237-amino-acid chain: 7-cyano-7-deazaguanine synthase (237 aa).

14 to 24 is an ATP binding site; it reads FSGGQDSATCL. Zn(2+) is bound by residues Cys202, Cys217, Cys220, and Cys223.

The protein belongs to the QueC family. Zn(2+) is required as a cofactor.

The enzyme catalyses 7-carboxy-7-deazaguanine + NH4(+) + ATP = 7-cyano-7-deazaguanine + ADP + phosphate + H2O + H(+). The protein operates within purine metabolism; 7-cyano-7-deazaguanine biosynthesis. In terms of biological role, catalyzes the ATP-dependent conversion of 7-carboxy-7-deazaguanine (CDG) to 7-cyano-7-deazaguanine (preQ(0)). The polypeptide is 7-cyano-7-deazaguanine synthase (Rhodopseudomonas palustris (strain TIE-1)).